Consider the following 776-residue polypeptide: LPS-assembly protein LptD (776 aa).

Residues 1 to 24 (MQHFSRTFLAASIATALFAPYAQA) form the signal peptide.

Belongs to the LptD family. As to quaternary structure, component of the lipopolysaccharide transport and assembly complex. Interacts with LptE and LptA.

Its subcellular location is the cell outer membrane. Functionally, together with LptE, is involved in the assembly of lipopolysaccharide (LPS) at the surface of the outer membrane. In Vibrio vulnificus (strain YJ016), this protein is LPS-assembly protein LptD.